The chain runs to 256 residues: Type III pantothenate kinase (256 aa).

D6–V13 provides a ligand contact to ATP. G107–R110 serves as a coordination point for substrate. D109 serves as the catalytic Proton acceptor. D129 lines the K(+) pocket. T132 lines the ATP pocket. A substrate-binding site is contributed by T184.

It belongs to the type III pantothenate kinase family. Homodimer. The cofactor is NH4(+). Requires K(+) as cofactor.

Its subcellular location is the cytoplasm. The catalysed reaction is (R)-pantothenate + ATP = (R)-4'-phosphopantothenate + ADP + H(+). The protein operates within cofactor biosynthesis; coenzyme A biosynthesis; CoA from (R)-pantothenate: step 1/5. Functionally, catalyzes the phosphorylation of pantothenate (Pan), the first step in CoA biosynthesis. This chain is Type III pantothenate kinase, found in Dinoroseobacter shibae (strain DSM 16493 / NCIMB 14021 / DFL 12).